The sequence spans 188 residues: Mitochondrial import receptor subunit TOM20-1 (188 aa).

Residues methionine 1–glutamate 164 lie on the Cytoplasmic side of the membrane. The helical transmembrane segment at lysine 165–isoleucine 182 threads the bilayer. Residues serine 183 to arginine 188 are Mitochondrial intermembrane-facing.

Belongs to the Tom20 family. As to quaternary structure, forms part of the preprotein translocase complex of the outer mitochondrial membrane (TOM complex) which consists of at least 6 different proteins (TOM5, TOM6, TOM7, TOM20, TOM22/TOM9 and TOM40). Component of a mitochondrial large protein complex that contains, at least, MIC60, DGS1, TOM40, TOM20 proteins, and petC/RISP. In terms of tissue distribution, barely detected in roots.

It is found in the mitochondrion outer membrane. In terms of biological role, central component of the receptor complex responsible for the recognition and translocation of cytosolically synthesized mitochondrial preproteins. Together with TOM22 functions as the transit peptide receptor at the surface of the mitochondrion outer membrane and facilitates the movement of preproteins into the translocation pore. The protein is Mitochondrial import receptor subunit TOM20-1 of Arabidopsis thaliana (Mouse-ear cress).